Consider the following 124-residue polypeptide: Large ribosomal subunit protein bL12 (124 aa).

The protein belongs to the bacterial ribosomal protein bL12 family. As to quaternary structure, homodimer. Part of the ribosomal stalk of the 50S ribosomal subunit. Forms a multimeric L10(L12)X complex, where L10 forms an elongated spine to which 2 to 4 L12 dimers bind in a sequential fashion. Binds GTP-bound translation factors.

In terms of biological role, forms part of the ribosomal stalk which helps the ribosome interact with GTP-bound translation factors. Is thus essential for accurate translation. The protein is Large ribosomal subunit protein bL12 of Herminiimonas arsenicoxydans.